A 463-amino-acid chain; its full sequence is 23S rRNA (uracil(1939)-C(5))-methyltransferase RlmD (463 aa).

Positions 6–76 (KSRKPQQPEY…KRLEEAEMVA (71 aa)) constitute a TRAM domain. The [4Fe-4S] cluster site is built by Cys-90, Cys-96, Cys-99, and Cys-178. Positions 288, 317, 322, 341, 368, and 389 each coordinate S-adenosyl-L-methionine. The Nucleophile role is filled by Cys-415.

It belongs to the class I-like SAM-binding methyltransferase superfamily. RNA M5U methyltransferase family. RlmD subfamily.

The enzyme catalyses uridine(1939) in 23S rRNA + S-adenosyl-L-methionine = 5-methyluridine(1939) in 23S rRNA + S-adenosyl-L-homocysteine + H(+). Catalyzes the formation of 5-methyl-uridine at position 1939 (m5U1939) in 23S rRNA. This is 23S rRNA (uracil(1939)-C(5))-methyltransferase RlmD from Acinetobacter baumannii (strain SDF).